The primary structure comprises 404 residues: Probable tRNA sulfurtransferase (404 aa).

The THUMP domain maps to Glu61–Glu166. ATP contacts are provided by residues Leu184–Leu185, His209–Phe210, Arg266, Gly288, and Gln297.

This sequence belongs to the ThiI family.

The protein localises to the cytoplasm. The catalysed reaction is [ThiI sulfur-carrier protein]-S-sulfanyl-L-cysteine + a uridine in tRNA + 2 reduced [2Fe-2S]-[ferredoxin] + ATP + H(+) = [ThiI sulfur-carrier protein]-L-cysteine + a 4-thiouridine in tRNA + 2 oxidized [2Fe-2S]-[ferredoxin] + AMP + diphosphate. The enzyme catalyses [ThiS sulfur-carrier protein]-C-terminal Gly-Gly-AMP + S-sulfanyl-L-cysteinyl-[cysteine desulfurase] + AH2 = [ThiS sulfur-carrier protein]-C-terminal-Gly-aminoethanethioate + L-cysteinyl-[cysteine desulfurase] + A + AMP + 2 H(+). Its pathway is cofactor biosynthesis; thiamine diphosphate biosynthesis. In terms of biological role, catalyzes the ATP-dependent transfer of a sulfur to tRNA to produce 4-thiouridine in position 8 of tRNAs, which functions as a near-UV photosensor. Also catalyzes the transfer of sulfur to the sulfur carrier protein ThiS, forming ThiS-thiocarboxylate. This is a step in the synthesis of thiazole, in the thiamine biosynthesis pathway. The sulfur is donated as persulfide by IscS. The sequence is that of Probable tRNA sulfurtransferase from Bacillus cereus (strain G9842).